The chain runs to 261 residues: MIFVISPAKALDFETPPVTAAATQPDYLREAEELIGILRQKTPAEVAELMHLSDPLAALNVARYERWHRPFTPDNAKQALLAFNGDVYGGLDAPSLSEDDFAWAQQHLRILSGLYGMLRPLDLMQPYRLEMGTRLGNPRGANLYAYWGDTLAEALNRLLAAERDAGGSAVLVNLASQEYFKAAARAKLTAQVITPVFEDWKGGRYRIITFYAKRARGLMSRYAIRNRVEDVEGLKGFDAEGYGFAPDVSDAETLVFRRRAD.

The protein belongs to the UPF0246 family.

The polypeptide is UPF0246 protein AZOSEA34360 (Aromatoleum aromaticum (strain DSM 19018 / LMG 30748 / EbN1) (Azoarcus sp. (strain EbN1))).